The primary structure comprises 699 residues: Elongation factor G (699 aa).

Positions 8 to 283 (EHIRNIGICA…AVVDFLPSPI (276 aa)) constitute a tr-type G domain. Residues 17-24 (AHIDAGKT), 81-85 (DTPGH), and 135-138 (NKMD) contribute to the GTP site.

This sequence belongs to the TRAFAC class translation factor GTPase superfamily. Classic translation factor GTPase family. EF-G/EF-2 subfamily.

The protein localises to the cytoplasm. Catalyzes the GTP-dependent ribosomal translocation step during translation elongation. During this step, the ribosome changes from the pre-translocational (PRE) to the post-translocational (POST) state as the newly formed A-site-bound peptidyl-tRNA and P-site-bound deacylated tRNA move to the P and E sites, respectively. Catalyzes the coordinated movement of the two tRNA molecules, the mRNA and conformational changes in the ribosome. This chain is Elongation factor G, found in Rickettsia parkeri.